A 706-amino-acid polypeptide reads, in one-letter code: mRNA (2'-O-methyladenosine-N(6)-)-methyltransferase (706 aa).

Positions Met1–Val34 are disordered. Polar residues predominate over residues Leu16–Cys29. Ser30 bears the Phosphoserine mark. Residues Glu43 to Leu77 enclose the WW domain. The tract at residues Gly88–Pro148 is disordered. The Nuclear localization signal signature appears at Lys109–Arg113. Ser116 is subject to Phosphoserine. Low complexity predominate over residues Ile132–Ile147. The residue at position 152 (Thr152) is a Phosphothreonine. Substrate-binding residues include Arg234 and Arg264. Asn552–Phe555 is an S-adenosyl-L-methionine binding site. Substrate is bound by residues Glu557 and Trp587–Pro591. An S-adenosyl-L-methionine-binding site is contributed by Phe613 to His615. Residues Thr663–Thr706 form a disordered region. Residues Gln668 to Ser686 carry the Nuclear localization signal motif. Over residues Ser675–Ser686 the composition is skewed to low complexity. A compositionally biased stretch (basic and acidic residues) spans Glu687–Thr706.

This sequence belongs to the CAPAM family. In terms of assembly, interacts with POLR2A; interacts with the phosphorylated C-terminal domain (CTD) of POLR2A.

It is found in the nucleus. The catalysed reaction is a 5'-end (N(7)-methyl 5'-triphosphoguanosine)-(2'-O-methyladenosine) in mRNA + S-adenosyl-L-methionine = a 5'-end (N(7)-methyl 5'-triphosphoguanosine)-(N(6),2'-O-dimethyladenosine) in mRNA + S-adenosyl-L-homocysteine + H(+). Its activity is regulated as follows. Cap-specific adenosine methyltransferase activity is inhibited by zinc. Cap-specific adenosine methyltransferase that catalyzes formation of N(6),2'-O-dimethyladenosine cap (m6A(m)) by methylating the adenosine at the second transcribed position of capped mRNAs. Recruited to the early elongation complex of RNA polymerase II (RNAPII) via interaction with POLR2A and mediates formation of m6A(m) co-transcriptionally. The sequence is that of mRNA (2'-O-methyladenosine-N(6)-)-methyltransferase from Mus musculus (Mouse).